The following is a 477-amino-acid chain: Serine/threonine protein phosphatase 2A 55 kDa regulatory subunit B' delta isoform (477 aa).

It belongs to the phosphatase 2A regulatory subunit B56 family. In terms of assembly, PP2A consists of a common heteromeric enzyme, composed of a catalytic subunit (subunits C), a constant regulatory subunit (subunit A), and a variety of regulatory subunits such as subunits B (the R2/B/PR55/B55, R3/B''/PR72/PR130/PR59 and R5/B'/B56 families). Interacts with SRK2E/OST1. In terms of tissue distribution, expressed ubiquitously.

It is found in the cytoplasm. The B regulatory subunit may modulate substrate selectivity and catalytic activity, and may also direct the localization of the catalytic enzyme to a particular subcellular compartment. The polypeptide is Serine/threonine protein phosphatase 2A 55 kDa regulatory subunit B' delta isoform (B'DELTA) (Arabidopsis thaliana (Mouse-ear cress)).